A 472-amino-acid polypeptide reads, in one-letter code: ATP synthase subunit beta (472 aa).

155–162 contributes to the ATP binding site; that stretch reads GGAGVGKT.

Belongs to the ATPase alpha/beta chains family. In terms of assembly, F-type ATPases have 2 components, CF(1) - the catalytic core - and CF(0) - the membrane proton channel. CF(1) has five subunits: alpha(3), beta(3), gamma(1), delta(1), epsilon(1). CF(0) has three main subunits: a(1), b(2) and c(9-12). The alpha and beta chains form an alternating ring which encloses part of the gamma chain. CF(1) is attached to CF(0) by a central stalk formed by the gamma and epsilon chains, while a peripheral stalk is formed by the delta and b chains.

It is found in the cell membrane. The catalysed reaction is ATP + H2O + 4 H(+)(in) = ADP + phosphate + 5 H(+)(out). Functionally, produces ATP from ADP in the presence of a proton gradient across the membrane. The catalytic sites are hosted primarily by the beta subunits. In Fervidobacterium islandicum, this protein is ATP synthase subunit beta.